A 374-amino-acid chain; its full sequence is MWKSLVFFVSALIWSFGSSQDCTTPTGSRSNCVSLYQCQPLYNAFEQRPLPTHVVSYLGRSQCGFEGYVPRVCCGPLPEEQEATSARPTQAPTQGSSDVFPEDSSPAPRNQCGIDTTGDRVYGGTITDLDEFPWMALLGYRTKKGTTSYQCGGVLVNHRYILTAAHCITGAIEQAVGTLITVRLGEYDTQQDVDCIDSVCADRPQEIRVASAYPHPGYSDKNKNRQDDIGIVRLATRAAYTYYVQPICLIDNRARLDTGSDVYVAGWGKTLNGRNSPIKLKLNLPIFNKQECDDKHRGEVLSSVQICAGGVFAEDACRGDSGGPLMKKTPNGIWEVVGVVSFGYGCGRDGWPGVYTSVARYIDWIQNTIASSNV.

The N-terminal stretch at 1–19 is a signal peptide; that stretch reads MWKSLVFFVSALIWSFGSS. Residues 20-120 constitute a propeptide, activation peptide; the sequence is QDCTTPTGSR…QCGIDTTGDR (101 aa). The region spanning 21-74 is the Clip domain; sequence DCTTPTGSRSNCVSLYQCQPLYNAFEQRPLPTHVVSYLGRSQCGFEGYVPRVCC. 3 disulfides stabilise this stretch: C22–C73, C32–C63, and C38–C74. Over residues 83–97 the composition is skewed to polar residues; the sequence is ATSARPTQAPTQGSS. A disordered region spans residues 83–114; the sequence is ATSARPTQAPTQGSSDVFPEDSSPAPRNQCGI. One can recognise a Peptidase S1 domain in the interval 121 to 370; it reads VYGGTITDLD…YIDWIQNTIA (250 aa). A disulfide bridge connects residues C151 and C167. H166 (charge relay system) is an active-site residue. Ca(2+)-binding residues include E186 and D194. The Charge relay system role is filled by D228. Disulfide bonds link C292–C307 and C317–C346. S321 (charge relay system) is an active-site residue.

Belongs to the peptidase S1 family. CLIP subfamily. Activated by the removal of the N-terminal inhibitory propeptide. In terms of tissue distribution, expressed in hemocytes.

It localises to the secreted. Its activity is regulated as follows. Inhibited by aprotenin. Not inhibited by EDTA, PMSF or leupeptin. Its function is as follows. Serine protease which, by cleaving and activating prophenoloxidase (PPO1) after immune challenge, plays an essential role in the melanization immune response to wounding. This is Phenoloxidase-activating enzyme 1 from Spodoptera litura (Asian cotton leafworm).